We begin with the raw amino-acid sequence, 2272 residues long: Voltage-dependent R-type calcium channel subunit alpha-1E (2272 aa).

The tract at residues 1–40 (MARFGEAVVVGRPGSGDGDSDQSRNRQGTPVPASGPAAAY) is disordered. The Cytoplasmic portion of the chain corresponds to 1–90 (MARFGEAVVV…KYAKKLIDWP (90 aa)). Phosphoserine is present on residues Ser-15 and Ser-20. One copy of the I repeat lies at 77 to 355 (NIVRKYAKKL…LVLGVLSGEF (279 aa)). A helical membrane pass occupies residues 91 to 109 (PFEYMILATIIANCIVLAL). Over 110 to 128 (EQHLPEDDKTPMSRRLEKT) the chain is Extracellular. Residues 129–147 (EPYFIGIFCFEAGIKIVAL) traverse the membrane as a helical segment. At 148-159 (GFIFHKGSYLRN) the chain is on the cytoplasmic side. The helical transmembrane segment at 160–174 (GWNVMDFIVVLSGIL) threads the bilayer. The Extracellular portion of the chain corresponds to 175 to 186 (ATAGTHFNTHVD). A helical membrane pass occupies residues 187-206 (LRALRAVRVLRPLKLVSGIP). Residues 207 to 224 (SLQIVLKSIMKAMVPLLQ) are Cytoplasmic-facing. Residues 225 to 245 (IGLLLFFAILMFAIIGLEFYS) traverse the membrane as a helical segment. The Extracellular segment spans residues 246 to 327 (GKLHRACFMN…NTNDALGATW (82 aa)). An N-linked (GlcNAc...) asparagine glycan is attached at Asn-255. The helical transmembrane segment at 328–351 (NWLYFIPLIIIGSFFVLNLVLGVL) threads the bilayer. Topologically, residues 352–477 (SGEFAKERER…ISIRHMVKSQ (126 aa)) are cytoplasmic. The binding to the beta subunit stretch occupies residues 375–392 (QQIERELNGYRAWIDKAE). Asp-427 is a Ca(2+) binding site. Ser-428 carries the phosphoserine modification. Positions 429, 431, 433, and 438 each coordinate Ca(2+). Thr-441 bears the Phosphothreonine mark. The stretch at 463 to 707 (ERLLRISIRH…VFLAIAVDNL (245 aa)) is one II repeat. Residues 478 to 497 (VFYWIVLSVVALNTACVAIV) form a helical membrane-spanning segment. The Extracellular segment spans residues 498–510 (HHNQPQWLTHLLY). A helical transmembrane segment spans residues 511–530 (YAEFLFLGLFLLEMSLKMYG). The Cytoplasmic segment spans residues 531–539 (MGPRLYFHS). The helical transmembrane segment at 540-558 (SFNCFDFGVTVGSIFEVVW) threads the bilayer. Over 559–568 (AIFRPGTSFG) the chain is Extracellular. The chain crosses the membrane as a helical span at residues 569 to 587 (ISVLRALRLLRIFKITKYW). At 588–606 (ASLRNLVVSLMSSMKSIIS) the chain is on the cytoplasmic side. The chain crosses the membrane as a helical span at residues 607 to 626 (LLFLLFLFIVVFALLGMQLF). Over 627–679 (GGRFNFNDGTPSANFDTFPAAIMTVFQILTGEDWNEVMYNGIRSQGGVSSGMW) the chain is Extracellular. Residues 680-704 (SAIYFIVLTLFGNYTLLNVFLAIAV) traverse the membrane as a helical segment. Residues 705-1150 (DNLANAQELT…TTNPIRRACH (446 aa)) lie on the Cytoplasmic side of the membrane. The disordered stretch occupies residues 730-777 (LQKAKEVSPMSAPNMPSIERDRRRRHHMSMWEPRSSHLRERRRRHHMS). Residues Ser-737, Ser-746, Ser-794, Ser-816, and Ser-856 each carry the phosphoserine modification. 2 disordered regions span residues 854–994 (GGSL…VPRG) and 1091–1127 (SNKT…RETG). Basic residues predominate over residues 914-927 (RHRQSQRRSRHRRV). The span at 934 to 946 (SASASRSRSASQE) shows a compositional bias: low complexity. Residue Ser-948 is modified to Phosphoserine. Composition is skewed to basic and acidic residues over residues 956 to 985 (EGEK…DLRR) and 1094 to 1105 (TDGEASPLKEAE). Phosphoserine is present on Ser-1099. The III repeat unit spans residues 1143-1429 (NPIRRACHYI…IFVALIIITF (287 aa)). The helical transmembrane segment at 1151 to 1167 (YIVNLRYFEMCILLVIA) threads the bilayer. The Extracellular segment spans residues 1168-1191 (ASSIALAAEDPVLTNSERNKVLRY). Residues 1192-1211 (FDYVFTGVFTFEMVIKMIDQ) traverse the membrane as a helical segment. Residues 1212–1219 (GLILQDGS) are Cytoplasmic-facing. A helical membrane pass occupies residues 1220 to 1242 (YFRDLWNILDFVVVVGALVAFAL). The Extracellular portion of the chain corresponds to 1243 to 1256 (ANALGTNKGRDIKT). The chain crosses the membrane as a helical span at residues 1257 to 1274 (IKSLRVLRVLRPLKTIKR). At 1275 to 1293 (LPKLKAVFDCVVTSLKNVF) the chain is on the cytoplasmic side. Residues 1294 to 1313 (NILIVYKLFMFIFAVIAVQL) form a helical membrane-spanning segment. Over 1314–1400 (FKGKFFYCTD…DRGPSRSNRM (87 aa)) the chain is Extracellular. Residues 1401-1424 (EMSIFYVVYFVVFPFFFVNIFVAL) traverse the membrane as a helical segment. The Cytoplasmic segment spans residues 1425–1481 (IIITFQEQGDKMMEECSLEKNERACIDFAISAKPLTRYMPQNRHTFQYRVWHFVVSP). One copy of the IV repeat lies at 1466 to 1729 (NRHTFQYRVW…LFVAVIMDNF (264 aa)). The chain crosses the membrane as a helical span at residues 1482–1500 (SFEYTIMAMIALNTVVLMM). The Extracellular segment spans residues 1501-1515 (KYYTAPCTYELALKY). Residues 1516–1535 (LNIAFTMVFSLECVLKVIAF) form a helical membrane-spanning segment. Topologically, residues 1536-1543 (GFLNYFRD) are cytoplasmic. Residues 1544–1562 (TWNIFDFITVIGSITEIIL) form a helical membrane-spanning segment. The Extracellular segment spans residues 1563–1573 (TDSKLVNTSGF). N-linked (GlcNAc...) asparagine glycosylation occurs at Asn-1569. Residues 1574-1592 (NMSFLKLFRAARLIKLLRQ) form a helical membrane-spanning segment. Over 1593–1611 (GYTIRILLWTFVQSFKALP) the chain is Cytoplasmic. The helical transmembrane segment at 1612-1631 (YVCLLIAMLFFIYAIIGMQV) threads the bilayer. Residues 1632 to 1700 (FGNIKLDEES…QNESERCGTD (69 aa)) lie on the Extracellular side of the membrane. A glycan (N-linked (GlcNAc...) asparagine) is linked at Asn-1692. The helical transmembrane segment at 1701-1726 (LAYVYFVSFIFFCSFLMLNLFVAVIM) threads the bilayer. At 1727-2272 (DNFEYLTRDS…LSDTEEDDKC (546 aa)) the chain is on the cytoplasmic side. In terms of domain architecture, EF-hand spans 1742-1777 (HHLDEFVRVWAEYDRAACGRIHYTEMYEMLTLMSPP). Ca(2+) contacts are provided by Asp-1755, Arg-1761, and Glu-1766. The segment at 2021–2186 (SAHRLNSDSG…QQGQHPSPQH (166 aa)) is disordered. The segment covering 2025–2045 (LNSDSGHKSDTHRSGGRERGR) has biased composition (basic and acidic residues). Phosphoserine is present on residues Ser-2054 and Ser-2073. Basic and acidic residues predominate over residues 2061-2078 (NSEERGTQADWESPERRQ). Positions 2097-2112 (SLSESSIPSISDTSTP) are enriched in low complexity. Positions 2155–2174 (LASQALESNSACLTESSNSL) are enriched in polar residues. Positions 2175–2186 (HPQQGQHPSPQH) are enriched in low complexity.

This sequence belongs to the calcium channel alpha-1 subunit (TC 1.A.1.11) family. CACNA1E subfamily. As to quaternary structure, interacts with EFHC1. Voltage-dependent calcium channels are multisubunit complexes, consisting of alpha-1, alpha-2, beta and delta subunits in a 1:1:1:1 ratio. The channel activity is directed by the pore-forming and voltage-sensitive alpha-1 subunit. In many cases, this subunit is sufficient to generate voltage-sensitive calcium channel activity. The auxiliary subunits beta and alpha-2/delta linked by a disulfide bridge regulate the channel activity. In terms of tissue distribution, expressed in neuronal tissues, retina, spleen, and pancreatic islet cells.

It localises to the membrane. The catalysed reaction is Ca(2+)(in) = Ca(2+)(out). In terms of biological role, voltage-sensitive calcium channels (VSCC) mediate the entry of calcium ions into excitable cells and are also involved in a variety of calcium-dependent processes, including muscle contraction, hormone or neurotransmitter release, gene expression, cell motility, cell division and cell death. The isoform alpha-1E gives rise to R-type calcium currents. R-type calcium channels belong to the 'high-voltage activated' (HVA) group and are blocked by nickel. They are however insensitive to dihydropyridines (DHP). Calcium channels containing alpha-1E subunit could be involved in the modulation of firing patterns of neurons which is important for information processing. This chain is Voltage-dependent R-type calcium channel subunit alpha-1E (Cacna1e), found in Mus musculus (Mouse).